We begin with the raw amino-acid sequence, 57 residues long: Small ribosomal subunit protein bS21 (57 aa).

The segment at 22-57 (QCSKSGVLSEAKKRKHYEKPSEKRKRKATEKRNSRK) is disordered. The span at 33–57 (KKRKHYEKPSEKRKRKATEKRNSRK) shows a compositional bias: basic residues.

Belongs to the bacterial ribosomal protein bS21 family.

The chain is Small ribosomal subunit protein bS21 from Natranaerobius thermophilus (strain ATCC BAA-1301 / DSM 18059 / JW/NM-WN-LF).